The sequence spans 548 residues: Glutamyl-tRNA(Gln) amidotransferase subunit B, chloroplastic/mitochondrial (548 aa).

Belongs to the GatB/GatE family. GatB subfamily. Subunit of the heterotrimeric GatCAB amidotransferase (AdT) complex, composed of A, B and C subunits.

Its subcellular location is the mitochondrion. It is found in the plastid. It localises to the chloroplast. The enzyme catalyses L-glutamyl-tRNA(Gln) + L-glutamine + ATP + H2O = L-glutaminyl-tRNA(Gln) + L-glutamate + ADP + phosphate + H(+). Its function is as follows. Allows the formation of correctly charged Gln-tRNA(Gln) through the transamidation of misacylated Glu-tRNA(Gln) in chloroplasts and mitochondria. The reaction takes place in the presence of glutamine and ATP through an activated gamma-phospho-Glu-tRNA(Gln). This chain is Glutamyl-tRNA(Gln) amidotransferase subunit B, chloroplastic/mitochondrial, found in Sorghum bicolor (Sorghum).